We begin with the raw amino-acid sequence, 154 residues long: Large ribosomal subunit protein uL13 (154 aa).

The protein belongs to the universal ribosomal protein uL13 family. Part of the 50S ribosomal subunit.

This protein is one of the early assembly proteins of the 50S ribosomal subunit, although it is not seen to bind rRNA by itself. It is important during the early stages of 50S assembly. The polypeptide is Large ribosomal subunit protein uL13 (Cereibacter sphaeroides (strain ATCC 17029 / ATH 2.4.9) (Rhodobacter sphaeroides)).